The following is a 203-amino-acid chain: RNA annealing protein YRA2 (203 aa).

Met-1 carries the post-translational modification N-acetylmethionine. Disordered stretches follow at residues 1–60 and 137–203; these read MDKA…REEP and QPQR…YMKG. Residues 11–20 show a composition bias toward polar residues; sequence NSHTDSSSNH. The span at 47 to 60 shows a compositional bias: basic and acidic residues; it reads SRSKDRLYREREEP. An RRM domain is found at 64 to 138; that stretch reads KRIRISKIPL…AKIEVEIYQP (75 aa). 2 stretches are compositionally biased toward basic residues: residues 139–153 and 163–180; these read QRKH…RRKQ and PGSH…KNKG.

The protein belongs to the YRA1 family. In terms of assembly, associates with mRNPs. Interacts with YRA1.

It localises to the nucleus. Its function is as follows. Involved in export of poly(A) mRNAs from the nucleus. Recruited to the coding sequences as well as poly-A sites of active genes. The protein is RNA annealing protein YRA2 (YRA2) of Saccharomyces cerevisiae (strain Lalvin EC1118 / Prise de mousse) (Baker's yeast).